Consider the following 244-residue polypeptide: 27 kDa core protein (244 aa).

The protein belongs to the chordopoxvirinae D3 family.

It is found in the virion. Functionally, late protein which is part of a large complex required for early virion morphogenesis. This complex participates in the formation of virosomes and the incorporation of virosomal contents into nascent immature virions. This chain is 27 kDa core protein, found in Swinepox virus (strain Swine/Nebraska/17077-99/1999) (SWPV).